The chain runs to 1037 residues: MSSQKRQSTLSRFFTTIKPSQSTESTLTEKVSSKSPPLPPPPPPPTASPSLPSEKLLEFGFDGTKDSTSTRTTTTKSKDVEKRKSTTSSGSSFSSESKPKRPKEKRLTPLEKQILELTEQHQDKILLIQIGYKYKVFGINALKVSKILNIMYISNDIEDTRFHYCSIPDTRLHIHLQRILSHGYKVGVVKQIESTIVKQIEKTSKSSDVMRREVTGVYTKATYLGDESNENTKGSWDGLSSSSSSSSSDVPEYIVCINEVSEKQFAIVAVQPLIGEVIFDSFKDDISRQELETRLLYLRPVEVIVITNGSSEQISGPTLMTLKLINHNCNIIHKSGSPSENGNENENENENEAIEAIMSKYLNEKLVEYYSINFSIPIQQCFEYLLLYLNEFKLTNIFTIPENITNFQDSKKYMILPANTLNSLEIFTNTTDHTTKGSLFKLLNNTKTIFGSRLLQKWVSRPLVHIQDIKDRHQAIEDLQSEYNHVVDSISNFLTKIKYLDLEGLLSKIHYSSTNNNNNNLRINRKQVYLLLSNLQEILILVQKFEKSIKSFKFKSSLLIQIFDELLTISQTDIIIIENFLSMIDLSFIDCKESSEQCRKFFKRNSFDSIELQYQNIAQYQQQIEQEQLEIIRKELGNSKLKYVQKDGERYLIEIRNNQRDKLSKILDDKDYILIKSTQTITRYRKKSVTEYLKLLQYHEEMLIKTCDEEFQNFLKDLDSNYTLFYKIIKNLAIFDCLLSLTTTSSLPNYTRPTLIDDDLTILVKQARHPTIEQLRPNYVANDININIEYDKNRVLIITGPNMGGKSSYVKTVALLTVMTQIGCYLPCQNATMGIFDSIFIRMGANDNILKGYSTFMMEMLQCKNIISMMSNRSLIILDEIGRGTGTIDGISLAYSILKYLIESEFKPLVLFITHYPSIHVLEQEYPNQLVVNYHMGYQEIKNNTPGEIPEIIFLYNLCRGVVNNSYGLNVAKLAGISHDIIKQAYRVSEKVKSDIELKEYWKFAHSLNKALKEGGSSSPNQLDDIDYYILSKHSSL.

Over residues methionine 1–lysine 30 the composition is skewed to polar residues. Disordered stretches follow at residues methionine 1–leucine 107 and asparagine 229–aspartate 249. Residues proline 36 to alanine 47 are compositionally biased toward pro residues. Composition is skewed to low complexity over residues aspartate 66 to threonine 75 and threonine 86 to glutamate 96. Residues proline 102–alanine 221 form a mispair-binding domain region. Glycine 800–serine 807 is an ATP binding site.

Belongs to the DNA mismatch repair MutS family. MSH3 subfamily. Heterodimer consisting of MSH2-MSH3 (MutS beta). Forms a ternary complex with MutL alpha (MLH1-PMS1).

The protein resides in the nucleus. In terms of biological role, component of the post-replicative DNA mismatch repair system (MMR). Heterodimerizes with MSH2 to form MutS beta, which binds to DNA mismatches thereby initiating DNA repair. MSH3 provides substrate-binding and substrate specificity to the complex. When bound, the MutS beta heterodimer bends the DNA helix and shields approximately 20 base pairs. Acts mainly to repair insertion-deletion loops (IDLs) from 2 to 13 nucleotides in size, but can also repair base-base and single insertion-deletion mismatches that occur during replication. After mismatch binding, forms a ternary complex with the MutL alpha heterodimer, which is thought to be responsible for directing the downstream MMR events, including strand discrimination, excision, and resynthesis. ATP binding and hydrolysis play a pivotal role in mismatch repair functions. The sequence is that of DNA mismatch repair protein MSH3 (MSH3) from Candida albicans (strain SC5314 / ATCC MYA-2876) (Yeast).